Consider the following 114-residue polypeptide: Secretoglobin family 2B member 2 (114 aa).

The signal sequence occupies residues 1 to 23 (MKGTLLLLALLVTGELGFQRTEA).

It belongs to the secretoglobin family. In terms of tissue distribution, expressed in lacrimal gland.

It is found in the secreted. The sequence is that of Secretoglobin family 2B member 2 (Scgb2b2) from Mus musculus (Mouse).